The chain runs to 234 residues: UPF0502 protein BPSS1373 (234 aa).

This sequence belongs to the UPF0502 family.

In Burkholderia pseudomallei (strain K96243), this protein is UPF0502 protein BPSS1373.